The primary structure comprises 185 residues: Elongation factor P (185 aa).

This sequence belongs to the elongation factor P family.

Its subcellular location is the cytoplasm. It participates in protein biosynthesis; polypeptide chain elongation. In terms of biological role, involved in peptide bond synthesis. Stimulates efficient translation and peptide-bond synthesis on native or reconstituted 70S ribosomes in vitro. Probably functions indirectly by altering the affinity of the ribosome for aminoacyl-tRNA, thus increasing their reactivity as acceptors for peptidyl transferase. In Mesoplasma florum (strain ATCC 33453 / NBRC 100688 / NCTC 11704 / L1) (Acholeplasma florum), this protein is Elongation factor P.